An 854-amino-acid chain; its full sequence is DNA mismatch repair protein MutS (854 aa).

614-621 lines the ATP pocket; sequence GPNMGGKS.

Belongs to the DNA mismatch repair MutS family.

In terms of biological role, this protein is involved in the repair of mismatches in DNA. It is possible that it carries out the mismatch recognition step. This protein has a weak ATPase activity. This is DNA mismatch repair protein MutS from Yersinia pestis bv. Antiqua (strain Antiqua).